A 402-amino-acid chain; its full sequence is Putative cytochrome P450 133B1 (402 aa).

Cys348 is a heme binding site.

The protein belongs to the cytochrome P450 family. Requires heme as cofactor.

This is Putative cytochrome P450 133B1 (cyp133B1) from Xylella fastidiosa (strain 9a5c).